The primary structure comprises 1614 residues: Low-density lipoprotein receptor-related protein 5 (1614 aa).

A signal peptide spans 1-30 (METAPTRAPPPPPPPLLLLVLYCSLVPAAA). The interval 31-287 (SPLLLFANRR…YSPMDIQVLS (257 aa)) is beta-propeller 1. Residues 31–1383 (SPLLLFANRR…PPSDDIPAHS (1353 aa)) are Extracellular-facing. 5 LDL-receptor class B repeats span residues 74–118 (GAVY…DWVG), 119–161 (KKLY…DPAH), 162–205 (GYMY…DLEE), 206–246 (QKLY…TLSG), and 247–289 (DTLY…LSQE). N-linked (GlcNAc...) asparagine glycans are attached at residues asparagine 92 and asparagine 137. The EGF-like 1 domain occupies 294 to 336 (FHTPCEEDNGGCSHLCLLSPREPFYSCACPTGVQLQDNGKTCK). 3 cysteine pairs are disulfide-bonded: cysteine 298/cysteine 309, cysteine 305/cysteine 320, and cysteine 322/cysteine 335. Residues 340–601 (EEVLLLARRT…AVNVAKVVGT (262 aa)) form a beta-propeller 2 region. LDL-receptor class B repeat units lie at residues 384 to 426 (GYVY…DWVA), 427 to 469 (RNLY…HPVM), 470 to 513 (GLMY…DLQE), 514 to 556 (GKLY…LGDF), and 557 to 599 (IYWT…AKVV). N-linked (GlcNAc...) asparagine glycans are attached at residues asparagine 445 and asparagine 498. An EGF-like 2 domain is found at 600 to 640 (GTNPCADGNGGCSHLCFFTPRATKCGCPIGLELLSDMKTCI). 3 disulfides stabilise this stretch: cysteine 604–cysteine 615, cysteine 611–cysteine 624, and cysteine 626–cysteine 639. The segment at 643-902 (EAFLVFTSRA…VFHSSRQDGL (260 aa)) is beta-propeller 3. LDL-receptor class B repeat units lie at residues 686–728 (NHIY…DWMG), 729–771 (KNLY…DPTK), 772–814 (GYIY…DYAD), 815–854 (QRLYWTDLDTNMIESSNMLGQERMVIADDLPYPFGLTQYS), and 855–897 (DYIY…FHSS). Residue asparagine 704 is glycosylated (N-linked (GlcNAc...) asparagine). Residue asparagine 877 is glycosylated (N-linked (GlcNAc...) asparagine). The EGF-like 3 domain maps to 901-941 (GLNDCVHSNGQCGQLCLAIPGGHRCGCASHYTLDPSSRNCS). 3 disulfide bridges follow: cysteine 905–cysteine 916, cysteine 912–cysteine 925, and cysteine 927–cysteine 940. Positions 944–1211 (STFLLFSQKF…AVEEVSLEEF (268 aa)) are beta-propeller 4. LDL-receptor class B repeat units follow at residues 988-1034 (KFIY…DIYS), 1035-1077 (RTLF…NAER), 1078-1122 (GYMY…DNAL), 1123-1164 (GKLF…VLGR), and 1165-1206 (HLYW…VEEV). Residues 1002–1025 (AKDDGTQPSMLTSPSQSLSPDRQP) are disordered. A compositionally biased stretch (polar residues) spans 1007–1021 (TQPSMLTSPSQSLSP). The EGF-like 4 domain maps to 1212 to 1253 (SAHPCARDNGGCSHICIAKGDGTPRCSCPVHLVLLQNLLTCG). 12 cysteine pairs are disulfide-bonded: cysteine 1216-cysteine 1227, cysteine 1223-cysteine 1237, cysteine 1239-cysteine 1252, cysteine 1258-cysteine 1272, cysteine 1265-cysteine 1285, cysteine 1279-cysteine 1294, cysteine 1297-cysteine 1309, cysteine 1304-cysteine 1322, cysteine 1316-cysteine 1331, cysteine 1335-cysteine 1347, cysteine 1342-cysteine 1360, and cysteine 1354-cysteine 1369. 3 LDL-receptor class A domains span residues 1257–1295 (TCSPDQFACTTGEIDCIPGAWRCDGFPECADQSDEEGCP), 1296–1332 (VCSASQFPCARGQCVDLRLRCDGEADCQDRSDEANCD), and 1334–1370 (VCLPNQFRCTSGQCVLIKQQCDSFPDCADGSDELMCE). The chain crosses the membrane as a helical span at residues 1384–1406 (SAIGPVIGIILSLFVMGGVYFVC). Over 1407 to 1614 (QRVMCQRYTG…PPPSPCTDSS (208 aa)) the chain is Cytoplasmic. The interval 1474-1498 (RNHVTGASSSSSSSTKATLYPPILN) is disordered. The PPPSP motif A motif lies at 1499 to 1505 (PPPSPAT). Residues 1537 to 1544 (PPTTPCST) carry the PPPSP motif B motif. The disordered stretch occupies residues 1567–1599 (SDSDPYPPPPTPHSQYLSAEDSCPPSPGTERSY). The PPPSP motif C motif lies at 1573 to 1580 (PPPPTPHS). A PPPSP motif D motif is present at residues 1590 to 1595 (PPSPGT). A PPPSP motif E motif is present at residues 1604–1611 (PPPPSPCT).

It belongs to the LDLR family. As to quaternary structure, homodimer; disulfide-linked. Forms phosphorylated oligomer aggregates on Wnt-signaling. Component of a WNT-signaling complex that contains a WNT protein, a FZD protein and LRP5 or LRP6. Interacts with FZD8; the interaction is formed on WNT-binding and signaling. Interacts (via the phosphorylated PPPSP motif domains) with AXIN1; the interaction prevents inhibition of beta-catenin phosphorylation and signaling and is enhanced in the presence of GSK3B and WNT1 or WNT3A. Interacts (via beta-propeller regions 3 and 4) with DKK1; the interaction, enhanced by MESD and/or KREMEN, inhibits beta-catenin signaling by preventing GSK3-mediated phosphorylation of the PPPSP motifs and subsequent, AXIN1 binding. Interacts with CSNK1E. Interacts with SOST; the interaction antagonizes canonical Wnt signaling. Interacts with APCDD1. Interacts with MESD; the interaction prevents the formation of LRP5 aggregates, targets LRP5 to the plasma membrane and, when complexed with KREMEN2, increases DKK1 binding. Interacts with CAPRIN2. Post-translationally, phosphorylation of cytoplasmic PPPSP motifs regulates the signal transduction of the Wnt signaling pathway through acting as a docking site for AXIN1. As to expression, widely expressed, with the highest expression levels in liver, heart, and lung and the lowest levels in brain and spleen.

Its subcellular location is the membrane. The protein localises to the endoplasmic reticulum. Its function is as follows. Acts as a coreceptor with members of the frizzled family of seven-transmembrane spanning receptors to transduce signal by Wnt proteins. Activates the canonical Wnt signaling pathway that controls cell fate determination and self-renewal during embryonic development and adult tissue regeneration. In particular, may play an important role in the development of the posterior patterning of the epiblast during gastrulation. During bone development, regulates osteoblast proliferation and differentiation thus determining bone mass. Mechanistically, the formation of the signaling complex between Wnt ligand, frizzled receptor and LRP5 coreceptor promotes the recruitment of AXIN1 to LRP5, stabilizing beta-catenin/CTNNB1 and activating TCF/LEF-mediated transcriptional programs. Acts as a coreceptor for non-Wnt proteins, such as norrin/NDP. Binding of norrin/NDP to frizzled 4/FZD4-LRP5 receptor complex triggers beta-catenin/CTNNB1-dependent signaling known to be required for retinal vascular development. Plays a role in controlling postnatal vascular regression in retina via macrophage-induced endothelial cell apoptosis. The polypeptide is Low-density lipoprotein receptor-related protein 5 (Mus musculus (Mouse)).